Consider the following 336-residue polypeptide: Glycerol-3-phosphate dehydrogenase [NAD(P)+] (336 aa).

Residues S11, W12, R33, R34, and K107 each coordinate NADPH. 2 residues coordinate sn-glycerol 3-phosphate: K107 and G137. A141 contacts NADPH. K192, D245, S255, R256, and N257 together coordinate sn-glycerol 3-phosphate. K192 serves as the catalytic Proton acceptor. R256 is a binding site for NADPH. E282 serves as a coordination point for NADPH.

It belongs to the NAD-dependent glycerol-3-phosphate dehydrogenase family.

The protein localises to the cytoplasm. It carries out the reaction sn-glycerol 3-phosphate + NAD(+) = dihydroxyacetone phosphate + NADH + H(+). The catalysed reaction is sn-glycerol 3-phosphate + NADP(+) = dihydroxyacetone phosphate + NADPH + H(+). It functions in the pathway membrane lipid metabolism; glycerophospholipid metabolism. Its function is as follows. Catalyzes the reduction of the glycolytic intermediate dihydroxyacetone phosphate (DHAP) to sn-glycerol 3-phosphate (G3P), the key precursor for phospholipid synthesis. This chain is Glycerol-3-phosphate dehydrogenase [NAD(P)+], found in Thermobifida fusca (strain YX).